We begin with the raw amino-acid sequence, 406 residues long: Glycosylated lysosomal membrane protein (406 aa).

Positions 1 to 35 (MRGSVECTWGWGHCAPSPLLLWTLLLFAAPFGLLG) are cleaved as a signal peptide. Over 36–372 (EKTRQVSLEV…VDGLSPLVLG (337 aa)) the chain is Lumenal. N-linked (GlcNAc...) asparagine glycosylation is found at Asn-65, Asn-134, Asn-159, Asn-187, and Asn-230. The chain crosses the membrane as a helical span at residues 373 to 393 (IMAVALGAPGLMLLGGGLVLL). Topologically, residues 394–406 (LHHKKYSEYQSIN) are cytoplasmic. The Lysosomal targeting motif signature appears at 402 to 406 (YQSIN).

The protein belongs to the GLMP family. As to quaternary structure, interacts (via lumenal domain) with lysosomal protein MFSD1; the interaction starts while both proteins are still in the endoplasmic reticulum and is required for stabilization of MFSD1 in lysosomes but has no direct effect on its targeting to lysosomes or transporter activity. Post-translationally, highly N-glycosylated. N-glycosylation is essential for GLMP stability and for MFSD1 lysosomal localization.

It is found in the lysosome membrane. Required to protect lysosomal transporter MFSD1 from lysosomal proteolysis and for MFSD1 lysosomal localization. The polypeptide is Glycosylated lysosomal membrane protein (Homo sapiens (Human)).